A 316-amino-acid chain; its full sequence is Adenine deaminase (316 aa).

The Zn(2+) site is built by histidine 14, histidine 16, and histidine 194. Glutamate 197 functions as the Proton donor in the catalytic mechanism. Residue aspartate 275 coordinates Zn(2+). Aspartate 276 lines the substrate pocket.

The protein belongs to the metallo-dependent hydrolases superfamily. Adenosine and AMP deaminases family. Adenine deaminase type 2 subfamily. Zn(2+) serves as cofactor.

It carries out the reaction adenine + H2O + H(+) = hypoxanthine + NH4(+). In terms of biological role, catalyzes the hydrolytic deamination of adenine to hypoxanthine. Plays an important role in the purine salvage pathway and in nitrogen catabolism. This chain is Adenine deaminase, found in Pseudomonas aeruginosa (strain UCBPP-PA14).